Here is a 715-residue protein sequence, read N- to C-terminus: Palmitoyltransferase ZDHHC5 (715 aa).

Topologically, residues 1–13 (MPAESGKRFKPSK) are cytoplasmic. The helical transmembrane segment at 14–34 (YVPVSAAAIFLVGATTLFFAF) threads the bilayer. Over 35-38 (TCPG) the chain is Extracellular. Residues 39 to 59 (LSLYVSPAVPIYNAIMFLFVL) form a helical membrane-spanning segment. Topologically, residues 60 to 148 (ANFSMATFMD…NCIGRRNYRY (89 aa)) are cytoplasmic. The residue at position 91 (tyrosine 91) is a Phosphotyrosine. Residues 104 to 154 (KWCATCRFYRPPRCSHCSVCDNCVEEFDHHCPWVNNCIGRRNYRYFFLFLL) enclose the DHHC domain. Cysteine 134 (S-palmitoyl cysteine intermediate) is an active-site residue. A helical transmembrane segment spans residues 149–169 (FFLFLLSLTAHIMGVFGFGLL). The Extracellular segment spans residues 170-191 (YVLYHIEELSGVRTAVTMAVMC). The helical transmembrane segment at 192–212 (VAGLFFIPVAGLTGFHVVLVA) threads the bilayer. Residues 213-715 (RGRTTNEQVT…VGGTTYEISV (503 aa)) lie on the Cytoplasmic side of the membrane. Serine 247 is modified (phosphoserine). Positions 289-715 (GELRRTKSKG…VGGTTYEISV (427 aa)) are disordered. At threonine 294 the chain carries Phosphothreonine. Serine 296 and serine 299 each carry phosphoserine. Threonine 303 is modified (phosphothreonine). Serine 345 carries the phosphoserine modification. A phosphothreonine mark is found at threonine 348 and threonine 350. A compositionally biased stretch (low complexity) spans 359–373 (SSSSTSAAMPHSSSA). Phosphoserine is present on residues serine 380, serine 398, serine 406, and serine 409. Threonine 411 is modified (phosphothreonine). Serine 415, serine 425, serine 429, and serine 432 each carry phosphoserine. Over residues 422 to 432 (SSGSRSSSLKS) the composition is skewed to low complexity. Residue threonine 436 is modified to Phosphothreonine. Residues 442–478 (QLQSIRSEGTTSTSYKSLANQTRNGSLSYDSLLTPSD) show a composition bias toward polar residues. Phosphoserine occurs at positions 529 and 554. Position 617 is an omega-N-methylarginine (arginine 617). At serine 621 the chain carries Phosphoserine. A Phosphothreonine modification is found at threonine 659. Residues 666–677 (LKTTYSKSNGQP) are compositionally biased toward polar residues. Serine 684 and serine 694 each carry phosphoserine. Arginine 697 carries the post-translational modification Omega-N-methylarginine.

It belongs to the DHHC palmitoyltransferase family. ERF2/ZDHHC9 subfamily.

Its subcellular location is the cell membrane. The catalysed reaction is L-cysteinyl-[protein] + hexadecanoyl-CoA = S-hexadecanoyl-L-cysteinyl-[protein] + CoA. Functionally, palmitoyltransferase that catalyzes the addition of palmitate onto various protein substrates such as CTNND2, CD36, GSDMD, NLRP3, NOD1, NOD2, STAT3 and S1PR1 thus plays a role in various biological processes including cell adhesion, inflammation, fatty acid uptake, bacterial sensing or cardiac functions. Plays an important role in the regulation of synapse efficacy by mediating palmitoylation of delta-catenin/CTNND2, thereby increasing synaptic delivery and surface stabilization of alpha-amino-3-hydroxy-5-methyl-4-isoxazole propionic acid receptors (AMPARs). Under basal conditions, remains at the synaptic membrane through FYN-mediated phosphorylation that prevents association with endocytic proteins. Neuronal activity enhances the internalization and trafficking of DHHC5 from spines to dendritic shafts where it palmitoylates delta-catenin/CTNND2. Regulates cell adhesion at the plasma membrane by palmitoylating GOLGA7B and DSG2. Plays a role in innate immune response by mediating the palmitoylation of NOD1 and NOD2 and their proper recruitment to the bacterial entry site and phagosomes. Also participates in fatty acid uptake by palmitoylating CD36 and thereby targeting it to the plasma membrane. Upon binding of fatty acids to CD36, gets phosphorylated by LYN leading to inactivation and subsequent CD36 caveolar endocytosis. Controls oligodendrocyte development by catalyzing STAT3 palmitoylation. Acts as a regulator of inflammatory response by mediating palmitoylation of NLRP3 and GSDMD. Palmitoylates NLRP3 to promote inflammasome assembly and activation. Activates pyroptosis by catalyzing palmitoylation of gasdermin-D (GSDMD), thereby promoting membrane translocation and pore formation of GSDMD. In Pan troglodytes (Chimpanzee), this protein is Palmitoyltransferase ZDHHC5 (ZDHHC5).